The following is a 414-amino-acid chain: 5-aminolevulinate synthase (414 aa).

Arg22, Ser133, and Lys152 together coordinate substrate. Residues Ser185, His213, and Thr241 each coordinate pyridoxal 5'-phosphate. The active site involves Lys244. Lys244 bears the N6-(pyridoxal phosphate)lysine mark. Pyridoxal 5'-phosphate contacts are provided by Thr273 and Thr274. Position 359 (Thr359) interacts with substrate.

This sequence belongs to the class-II pyridoxal-phosphate-dependent aminotransferase family. Homodimer. The cofactor is pyridoxal 5'-phosphate.

The enzyme catalyses succinyl-CoA + glycine + H(+) = 5-aminolevulinate + CO2 + CoA. It functions in the pathway porphyrin-containing compound metabolism; protoporphyrin-IX biosynthesis; 5-aminolevulinate from glycine: step 1/1. This Rickettsia felis (strain ATCC VR-1525 / URRWXCal2) (Rickettsia azadi) protein is 5-aminolevulinate synthase (hemA).